Reading from the N-terminus, the 563-residue chain is Ribulokinase (563 aa).

Belongs to the ribulokinase family.

It catalyses the reaction D-ribulose + ATP = D-ribulose 5-phosphate + ADP + H(+). The enzyme catalyses L-ribulose + ATP = L-ribulose 5-phosphate + ADP + H(+). It functions in the pathway carbohydrate degradation; L-arabinose degradation via L-ribulose; D-xylulose 5-phosphate from L-arabinose (bacterial route): step 2/3. The polypeptide is Ribulokinase (Mycolicibacterium smegmatis (Mycobacterium smegmatis)).